A 4486-amino-acid chain; its full sequence is Dynein axonemal heavy chain 9 (4486 aa).

The stem stretch occupies residues 1-1831 (MRLAEERAAL…FANICDAQFL (1831 aa)). Coiled-coil stretches lie at residues 381 to 410 (DLLRSEVEESQRKLQVVSDTLSFFKQEFQD), 504 to 529 (QSTDFENDVSEFNQKVEDLDRRLGTI), 639 to 662 (AEGKRMQQKYEDMLSLLEKYETRL), 752 to 823 (TLLE…TWVT), and 1326 to 1355 (NINVEAMELECKQFARHIRNLDKEVRAWDA). AAA regions lie at residues 1832-2053 (YSYE…VLVV), 2113-2334 (ALVR…TRFK), 2440-2688 (EFDP…IFQG), and 2787-3036 (NHNE…EQRY). ATP contacts are provided by residues 1870-1877 (GPAGTGKT), 2151-2158 (GGAGTGKS), 2478-2485 (GTAGTGKS), and 2825-2832 (GVGGSGKQ). Coiled-coil stretches lie at residues 3051 to 3154 (YQSL…AKAE), 3285 to 3341 (KRQA…AEVT), and 3640 to 3675 (LVENLEITKQTAAEVEKKVQEAKVTEVKINEAREHY). The segment at 3051 to 3341 (YQSLLHRHRK…LKCQQEAEVT (291 aa)) is stalk. 2 AAA regions span residues 3429–3656 (LMDD…EVEK) and 3866–4092 (LRDF…VLYN).

It belongs to the dynein heavy chain family. In terms of assembly, consists of at least two heavy chains and a number of intermediate and light chains. Interacts with ODAD1. Expressed in upper and lower respiratory airway epithelia (at protein level). Not detected in spermatozoa (at protein level).

It localises to the cytoplasm. It is found in the cytoskeleton. The protein localises to the cilium axoneme. Force generating protein required for cilia beating in respiratory epithelia. Produces force towards the minus ends of microtubules. Dynein has ATPase activity; the force-producing power stroke is thought to occur on release of ADP. The protein is Dynein axonemal heavy chain 9 of Homo sapiens (Human).